A 222-amino-acid polypeptide reads, in one-letter code: Glutathione S-transferase 3 (222 aa).

Residues 2–83 form the GST N-terminal domain; the sequence is APLKLYGMPL…YIASKYASEG (82 aa). Residues Ser-12, 13–14, 41–42, 54–55, and 67–68 each bind glutathione; these read PN, HK, QI, and ES. One can recognise a GST C-terminal domain in the interval 89-219; the sequence is ATASAAKLEV…AAIPLPPPPS (131 aa).

Belongs to the GST superfamily. Phi family. In terms of assembly, homodimer.

It catalyses the reaction RX + glutathione = an S-substituted glutathione + a halide anion + H(+). Conjugation of reduced glutathione to a wide number of exogenous and endogenous hydrophobic electrophiles. Involved in the detoxification of certain herbicides. In Zea mays (Maize), this protein is Glutathione S-transferase 3.